A 369-amino-acid polypeptide reads, in one-letter code: MKTLHRCIGVALLALGALAGTAHADRIKDLTTIAGVRENALIGYGLVVGLDGSGDQTTQTPFTIQSFNNMLSQFGINVPSGASIQLKNTAAVVVTASLPAFVRPGQTIDVTVSSIGNAKSLRGGTLLLTPLKGVDGQLYALAQGNVVIGGAGASANGSKVQINQLGAGRIANGATVERTVQATVGEAGSIQLDTGTTDFGTVQNIVNAINKQFGADTAEAADGRTVNVRAPALAADRVGFVAKLQNIEVTPAQAAARVVVNARTGSVVMNQQVKLEPCAVAHGNLSVTISTEPVVSQPAPFSQGQTVAGARSNIEVKQQGGSLINVKGGTNLADVVKAINAIGANPQDLISILQAMKAANALRADLEII.

Positions 1–24 are cleaved as a signal peptide; the sequence is MKTLHRCIGVALLALGALAGTAHA.

Belongs to the FlgI family. The basal body constitutes a major portion of the flagellar organelle and consists of four rings (L,P,S, and M) mounted on a central rod.

Its subcellular location is the periplasm. The protein localises to the bacterial flagellum basal body. Its function is as follows. Assembles around the rod to form the L-ring and probably protects the motor/basal body from shearing forces during rotation. In Ralstonia nicotianae (strain ATCC BAA-1114 / GMI1000) (Ralstonia solanacearum), this protein is Flagellar P-ring protein.